A 185-amino-acid polypeptide reads, in one-letter code: NADH-quinone oxidoreductase subunit B (185 aa).

[4Fe-4S] cluster-binding residues include C64, C65, C129, and C159.

Belongs to the complex I 20 kDa subunit family. NDH-1 is composed of 14 different subunits. Subunits NuoB, C, D, E, F, and G constitute the peripheral sector of the complex. It depends on [4Fe-4S] cluster as a cofactor.

The protein localises to the cell inner membrane. It carries out the reaction a quinone + NADH + 5 H(+)(in) = a quinol + NAD(+) + 4 H(+)(out). Its function is as follows. NDH-1 shuttles electrons from NADH, via FMN and iron-sulfur (Fe-S) centers, to quinones in the respiratory chain. Couples the redox reaction to proton translocation (for every two electrons transferred, four hydrogen ions are translocated across the cytoplasmic membrane), and thus conserves the redox energy in a proton gradient. The polypeptide is NADH-quinone oxidoreductase subunit B (Rhodospirillum rubrum (strain ATCC 11170 / ATH 1.1.1 / DSM 467 / LMG 4362 / NCIMB 8255 / S1)).